A 285-amino-acid polypeptide reads, in one-letter code: ATP synthase gamma chain (285 aa).

Belongs to the ATPase gamma chain family. In terms of assembly, F-type ATPases have 2 components, CF(1) - the catalytic core - and CF(0) - the membrane proton channel. CF(1) has five subunits: alpha(3), beta(3), gamma(1), delta(1), epsilon(1). CF(0) has three main subunits: a, b and c.

Its subcellular location is the cell membrane. Its function is as follows. Produces ATP from ADP in the presence of a proton gradient across the membrane. The gamma chain is believed to be important in regulating ATPase activity and the flow of protons through the CF(0) complex. The chain is ATP synthase gamma chain from Geobacillus kaustophilus (strain HTA426).